Consider the following 84-residue polypeptide: uncharacterized protein (84 aa).

This sequence to M.jannaschii MJ1121.

This is an uncharacterized protein from Archaeoglobus fulgidus (strain ATCC 49558 / DSM 4304 / JCM 9628 / NBRC 100126 / VC-16).